Here is a 278-residue protein sequence, read N- to C-terminus: Tumor necrosis factor ligand superfamily member 6 (278 aa).

Residues 1–77 are Cytoplasmic-facing; that stretch reads MQQPVNYPCP…SPLKKKDNIE (77 aa). The interval 26 to 68 is disordered; that stretch reads PGSVFSCPSSGPRGPGQRRPPPPPPPPSPLPPPSQPPPLPPLS. The span at 33 to 42 shows a compositional bias: low complexity; that stretch reads PSSGPRGPGQ. Residues 43 to 68 are compositionally biased toward pro residues; it reads RRPPPPPPPPSPLPPPSQPPPLPPLS. The chain crosses the membrane as a helical; Signal-anchor for type II membrane protein span at residues 78 to 99; that stretch reads LWLPVIFFMVLVALVGMGLGMY. Residues 100–278 are Extracellular-facing; that stretch reads QLFHLQKELA…SKTFFGLYKL (179 aa). Asn-116 carries N-linked (GlcNAc...) asparagine glycosylation. Polar residues predominate over residues 125 to 135; sequence EKQIANPSTPS. Positions 125–147 are disordered; sequence EKQIANPSTPSETKKPRSVAHLT. Residues 142-278 enclose the THD domain; sequence SVAHLTGNPR…SKTFFGLYKL (137 aa). An intrachain disulfide couples Cys-199 to Cys-230. N-linked (GlcNAc...) asparagine glycans are attached at residues Asn-247 and Asn-257.

The protein belongs to the tumor necrosis factor family. In terms of assembly, homotrimer. Interacts with ARHGAP9, BAIAP2L1, BTK, CACNB3, CACNB4, CRK, DLG2, DNMBP, DOCK4, EPS8L3, FGR, FYB1, FYN, HCK, ITK, ITSN2, KALRN, LYN, MACC1, MIA, MPP4, MYO15A, NCF1, NCK1, NCK2, NCKIPSD, OSTF1, PIK3R1, PSTPIP1, RIMBP3C, SAMSN1, SH3GL3, SH3PXD2B, SH3PXD2A, SH3RF2, SKAP2, SNX33, SNX9, SORBS3, SPTA1, SRC, SRGAP1, SRGAP2, SRGAP3, TEC, TJP3 and YES1. Post-translationally, the soluble form derives from the membrane form by proteolytic processing. The membrane-bound form undergoes two successive intramembrane proteolytic cleavages. The first one is processed by ADAM10 producing an N-terminal fragment, which lacks the receptor-binding extracellular domain. This ADAM10-processed FasL (FasL APL) remnant form is still membrane anchored and further processed by SPPL2A that liberates the FasL intracellular domain (FasL ICD). FasL shedding by ADAM10 is a prerequisite for subsequent intramembrane cleavage by SPPL2A in T-cells. Phosphorylated by FGR on tyrosine residues; this is required for ubiquitination and subsequent internalization. In terms of processing, N-glycosylated. Post-translationally, monoubiquitinated. As to expression, expressed in activated splenocytes and thymocytes. Moderate or weak expression found in small intestines, kidney and lung.

Its subcellular location is the cell membrane. The protein resides in the cytoplasmic vesicle lumen. It localises to the lysosome lumen. It is found in the secreted. The protein localises to the nucleus. Its function is as follows. Cytokine that binds to TNFRSF6/FAS, a receptor that transduces the apoptotic signal into cells. Involved in cytotoxic T-cell-mediated apoptosis, natural killer cell-mediated apoptosis and in T-cell development. Initiates fratricidal/suicidal activation-induced cell death (AICD) in antigen-activated T-cells contributing to the termination of immune responses. TNFRSF6/FAS-mediated apoptosis also has a role in the induction of peripheral tolerance. Binds to TNFRSF6B/DcR3, a decoy receptor that blocks apoptosis. In terms of biological role, induces FAS-mediated activation of NF-kappa-B, initiating non-apoptotic signaling pathways. Can induce apoptosis but does not appear to be essential for this process. Functionally, cytoplasmic form induces gene transcription inhibition. The polypeptide is Tumor necrosis factor ligand superfamily member 6 (Faslg) (Rattus norvegicus (Rat)).